The primary structure comprises 296 residues: Fructose-bisphosphate aldolase class 1 (296 aa).

Residue Glu-175 is the Proton acceptor of the active site. Catalysis depends on Lys-212, which acts as the Schiff-base intermediate with dihydroxyacetone-P.

The protein belongs to the class I fructose-bisphosphate aldolase family.

It catalyses the reaction beta-D-fructose 1,6-bisphosphate = D-glyceraldehyde 3-phosphate + dihydroxyacetone phosphate. The protein operates within carbohydrate degradation; glycolysis; D-glyceraldehyde 3-phosphate and glycerone phosphate from D-glucose: step 4/4. The protein is Fructose-bisphosphate aldolase class 1 (fda) of Staphylococcus carnosus (strain TM300).